The primary structure comprises 238 residues: Major prion protein (238 aa).

The N-terminal stretch at 1-15 is a signal peptide; it reads MLVLFVATWSDLGLC. Positions 16 to 215 are interaction with GRB2, ERI3 and SYN1; the sequence is KKRPKPGGWN…ESQAYYQRGS (200 aa). Residues 18–93 are disordered; that stretch reads RPKPGGWNTG…WHKPSKPKTS (76 aa). 4 tandem repeats follow at residues 44-52, 53-60, 61-68, and 69-76. A 4 X 8 AA tandem repeats of P-H-G-G-G-W-G-Q region spans residues 44–76; sequence PQGGGGWGQPHGGGWGQPHGGGWGQPHGGGWGQ. A compositionally biased stretch (gly residues) spans 45–80; the sequence is QGGGGWGQPHGGGWGQPHGGGWGQPHGGGWGQGGGT. Positions 47, 48, 54, 55, 56, 62, 63, 64, 70, 71, and 72 each coordinate Cu(2+). A compositionally biased stretch (basic residues) spans 83-93; the sequence is QWHKPSKPKTS. The cysteines at positions 164 and 199 are disulfide-linked. N-linked (GlcNAc...) asparagine glycans are attached at residues Asn-166 and Asn-182. Ser-215 carries the GPI-anchor amidated serine lipid modification. Residues 216–238 constitute a propeptide, removed in mature form; it reads SMVLFSSPPVILLISFLIFLIVG.

Belongs to the prion family. In terms of assembly, monomer and homodimer. Has a tendency to aggregate into amyloid fibrils containing a cross-beta spine, formed by a steric zipper of superposed beta-strands. Soluble oligomers may represent an intermediate stage on the path to fibril formation. Copper binding may promote oligomerization. Interacts with GRB2, APP, ERI3/PRNPIP and SYN1. Mislocalized cytosolically exposed PrP interacts with MGRN1; this interaction alters MGRN1 subcellular location and causes lysosomal enlargement. Interacts with KIAA1191.

Its subcellular location is the cell membrane. It localises to the golgi apparatus. Functionally, its primary physiological function is unclear. Has cytoprotective activity against internal or environmental stresses. May play a role in neuronal development and synaptic plasticity. May be required for neuronal myelin sheath maintenance. May play a role in iron uptake and iron homeostasis. Soluble oligomers are toxic to cultured neuroblastoma cells and induce apoptosis (in vitro). Association with GPC1 (via its heparan sulfate chains) targets PRNP to lipid rafts. Also provides Cu(2+) or Zn(2+) for the ascorbate-mediated GPC1 deaminase degradation of its heparan sulfate side chains. In Macaca sylvanus (Barbary macaque), this protein is Major prion protein (PRNP).